The following is a 351-amino-acid chain: Histidine protein kinase SaeS (351 aa).

2 consecutive transmembrane segments (helical) span residues 9–29 (IIIG…IAYI) and 40–60 (TLTL…SIFI). An HAMP domain is found at 61–114 (NPLIQKIKQFNIKTKQFANGNYASNDKTFNSPKEIYELNQSFNKMASEITQQMN). Residues 129–348 (NLAHDLKTPL…TMTVTLHKLD (220 aa)) enclose the Histidine kinase domain. Residue H132 is modified to Phosphohistidine; by autocatalysis.

Autophosphorylated.

Its subcellular location is the cell membrane. The enzyme catalyses ATP + protein L-histidine = ADP + protein N-phospho-L-histidine.. Functionally, member of the two-component regulatory system SaeR/SaeS involved in the regulation of staphylococcal virulence factors in a strain-dependent fashion. Probably functions as a membrane-associated protein kinase that upon sensing the appropriate signal, autophosphorylates and in turn activates the cytosolic response regulator SaeR. This chain is Histidine protein kinase SaeS (saeS), found in Staphylococcus aureus (strain bovine RF122 / ET3-1).